A 306-amino-acid polypeptide reads, in one-letter code: Acetylglutamate kinase (306 aa).

Substrate contacts are provided by residues 68-69 (GG), R90, and N195.

It belongs to the acetylglutamate kinase family. ArgB subfamily.

It is found in the cytoplasm. It carries out the reaction N-acetyl-L-glutamate + ATP = N-acetyl-L-glutamyl 5-phosphate + ADP. It functions in the pathway amino-acid biosynthesis; L-arginine biosynthesis; N(2)-acetyl-L-ornithine from L-glutamate: step 2/4. Functionally, catalyzes the ATP-dependent phosphorylation of N-acetyl-L-glutamate. This Chromohalobacter salexigens (strain ATCC BAA-138 / DSM 3043 / CIP 106854 / NCIMB 13768 / 1H11) protein is Acetylglutamate kinase.